Here is a 177-residue protein sequence, read N- to C-terminus: Bifunctional protein PyrR (177 aa).

The short motif at 97–109 is the PRPP-binding element; it reads IILVDDVLYTGRT.

The protein belongs to the purine/pyrimidine phosphoribosyltransferase family. PyrR subfamily.

It carries out the reaction UMP + diphosphate = 5-phospho-alpha-D-ribose 1-diphosphate + uracil. In terms of biological role, regulates the transcription of the pyrimidine nucleotide (pyr) operon in response to exogenous pyrimidines. Its function is as follows. Also displays a weak uracil phosphoribosyltransferase activity which is not physiologically significant. The sequence is that of Bifunctional protein PyrR from Nitrosococcus oceani (strain ATCC 19707 / BCRC 17464 / JCM 30415 / NCIMB 11848 / C-107).